Reading from the N-terminus, the 2124-residue chain is AMB antimetabolite synthetase AmbE (2124 aa).

The tract at residues leucine 456 to isoleucine 847 is adenylation. The interval aspartate 950 to valine 1147 is methyltransferase. Residues alanine 1251–alanine 1325 form the Carrier 1 domain. Serine 1286 is subject to O-(pantetheine 4'-phosphoryl)serine. The condensation stretch occupies residues aspartate 1359–proline 1780. Residues alanine 1785 to aspartate 1859 form the Carrier 2 domain. O-(pantetheine 4'-phosphoryl)serine is present on serine 1819. The tract at residues arginine 1886 to arginine 2107 is thioesterase.

This sequence belongs to the NRP synthetase family. Pantetheine 4'-phosphate serves as cofactor.

The enzyme catalyses holo-[peptidyl-carrier protein] + L-glutamate + ATP = L-glutamyl-[peptidyl-carrier protein] + AMP + diphosphate. Involved in the biosynthesis of the antimetabolite L-2-amino-4-methoxy-trans-3-butenoic acid (AMB), a non-proteinogenic amino acid which is toxic for prokaryotes and eukaryotes. Adenylates L-glutamate and loads it onto its first peptidyl carrier domain via a thioester linkage to the phosphopanthetheine moiety. The second peptidyl carrier domain is loaded with a L-alanine activated by AmbB. After formation by AmbB of the L-Glu-L-Ala dipeptide at the first carrier domain of AmbE, the condensation domain of AmbE probably condenses this dipeptide with the L-Ala residue attached at the second carrier domain of AmbE to give the L-Ala-L-Glu-L-Ala tripeptide. The central amino acid, L-Glu, would then undergo a series of modifications to be converted into AMB while the two flanking L-Ala residues remain in place. Finally, the L-Ala-AMB-L-Ala tripeptide is probably released by thioester cleavage via the thioester domain of AmbE. In Pseudomonas aeruginosa (strain ATCC 15692 / DSM 22644 / CIP 104116 / JCM 14847 / LMG 12228 / 1C / PRS 101 / PAO1), this protein is AMB antimetabolite synthetase AmbE.